We begin with the raw amino-acid sequence, 514 residues long: 2,3-bisphosphoglycerate-independent phosphoglycerate mutase (514 aa).

Mn(2+)-binding residues include Asp14 and Ser64. Ser64 (phosphoserine intermediate) is an active-site residue. Substrate-binding positions include His125, 155–156 (RD), Arg187, Arg193, 263–266 (RADR), and Lys337. Positions 404, 408, 445, 446, and 464 each coordinate Mn(2+).

Belongs to the BPG-independent phosphoglycerate mutase family. In terms of assembly, monomer. Mn(2+) is required as a cofactor.

It catalyses the reaction (2R)-2-phosphoglycerate = (2R)-3-phosphoglycerate. It functions in the pathway carbohydrate degradation; glycolysis; pyruvate from D-glyceraldehyde 3-phosphate: step 3/5. In terms of biological role, catalyzes the interconversion of 2-phosphoglycerate and 3-phosphoglycerate. This Pseudoalteromonas translucida (strain TAC 125) protein is 2,3-bisphosphoglycerate-independent phosphoglycerate mutase.